A 279-amino-acid polypeptide reads, in one-letter code: Nitrate import permease protein NrtB (279 aa).

The ABC transmembrane type-1 domain maps to 86–270; sequence IAASLQRVAV…LLNALVGFIA (185 aa). A run of 6 helical transmembrane segments spans residues 98–118, 124–144, 151–171, 196–216, 217–237, and 249–269; these read LMAA…VLMF, IFQV…LAAF, AIFV…AVGV, VLLP…IGLS, WLAI…FFIW, and ILAI…VGFI.

The protein belongs to the binding-protein-dependent transport system permease family. CysTW subfamily. In terms of assembly, the complex is composed of two ATP-binding proteins (NrtC and NrtD), two transmembrane proteins (NrtB) and a solute-binding protein (NrtA).

Its subcellular location is the cell inner membrane. Functionally, part of the ABC transporter complex NrtABCD involved in nitrate uptake. The complex is probably also involved in nitrite transport. Probably responsible for the translocation of the substrate across the membrane. This is Nitrate import permease protein NrtB from Leptolyngbya laminosa (Phormidium laminosum).